The primary structure comprises 157 residues: GTP-dependent dephospho-CoA kinase (157 aa).

GTP-binding residues include aspartate 40, aspartate 59, lysine 61, glutamate 107, and aspartate 128.

This sequence belongs to the GTP-dependent DPCK family.

It catalyses the reaction 3'-dephospho-CoA + GTP = GDP + CoA + H(+). It participates in cofactor biosynthesis; coenzyme A biosynthesis. Its function is as follows. Catalyzes the GTP-dependent phosphorylation of the 3'-hydroxyl group of dephosphocoenzyme A to form coenzyme A (CoA). This is GTP-dependent dephospho-CoA kinase from Desulfurococcus amylolyticus (strain DSM 18924 / JCM 16383 / VKM B-2413 / 1221n) (Desulfurococcus kamchatkensis).